The primary structure comprises 582 residues: Max-binding protein MNT (582 aa).

Position 2 is an N-acetylserine (serine 2). The segment at glutamine 18–valine 224 is disordered. A compositionally biased stretch (basic and acidic residues) spans arginine 22–lysine 42. Pro residues-rich tracts occupy residues glutamate 61–threonine 82 and glutamine 99–proline 108. Residues alanine 109–leucine 123 are compositionally biased toward low complexity. Pro residues-rich tracts occupy residues alanine 135–leucine 149 and asparagine 160–threonine 171. Residues proline 203–lysine 214 show a composition bias toward basic and acidic residues. In terms of domain architecture, bHLH spans glycine 220–leucine 271. The leucine-zipper stretch occupies residues leucine 271–leucine 299. The segment at threonine 319–threonine 422 is disordered. The span at glutamate 334–glutamate 345 shows a compositional bias: acidic residues. Residues leucine 368–histidine 381 are compositionally biased toward pro residues. Residues histidine 387–proline 408 are compositionally biased toward low complexity. Pro residues predominate over residues leucine 409 to alanine 418.

In terms of assembly, efficient DNA binding requires dimerization with another bHLH protein. Binds DNA as a homodimer or a heterodimer with MAX.

Its subcellular location is the nucleus. Binds DNA as a heterodimer with MAX and represses transcription. Binds to the canonical E box sequence 5'-CACGTG-3' and, with higher affinity, to 5'-CACGCG-3'. This chain is Max-binding protein MNT (MNT), found in Homo sapiens (Human).